Reading from the N-terminus, the 317-residue chain is Acetyl-coenzyme A carboxylase carboxyl transferase subunit alpha (317 aa).

The region spanning 40–293 (LEGRVRDAMM…GTVIADALKE (254 aa)) is the CoA carboxyltransferase C-terminal domain.

Belongs to the AccA family. In terms of assembly, acetyl-CoA carboxylase is a heterohexamer composed of biotin carboxyl carrier protein (AccB), biotin carboxylase (AccC) and two subunits each of ACCase subunit alpha (AccA) and ACCase subunit beta (AccD).

The protein resides in the cytoplasm. It catalyses the reaction N(6)-carboxybiotinyl-L-lysyl-[protein] + acetyl-CoA = N(6)-biotinyl-L-lysyl-[protein] + malonyl-CoA. It functions in the pathway lipid metabolism; malonyl-CoA biosynthesis; malonyl-CoA from acetyl-CoA: step 1/1. Functionally, component of the acetyl coenzyme A carboxylase (ACC) complex. First, biotin carboxylase catalyzes the carboxylation of biotin on its carrier protein (BCCP) and then the CO(2) group is transferred by the carboxyltransferase to acetyl-CoA to form malonyl-CoA. The protein is Acetyl-coenzyme A carboxylase carboxyl transferase subunit alpha of Sinorhizobium fredii (strain NBRC 101917 / NGR234).